The chain runs to 741 residues: Phosphoribosylformylglycinamidine synthase subunit PurL (741 aa).

The active site involves histidine 53. ATP contacts are provided by tyrosine 56 and lysine 95. Glutamate 97 contributes to the Mg(2+) binding site. Substrate contacts are provided by residues 98-101 and arginine 120; that span reads SHNH. The active-site Proton acceptor is the histidine 99. Position 121 (aspartate 121) interacts with Mg(2+). A substrate-binding site is contributed by glutamine 244. Aspartate 274 lines the Mg(2+) pocket. Substrate is bound at residue 318–320; the sequence is ESQ. ATP is bound by residues aspartate 501 and glycine 538. Asparagine 539 is a binding site for Mg(2+). Substrate is bound at residue serine 541.

It belongs to the FGAMS family. As to quaternary structure, monomer. Part of the FGAM synthase complex composed of 1 PurL, 1 PurQ and 2 PurS subunits.

It is found in the cytoplasm. The enzyme catalyses N(2)-formyl-N(1)-(5-phospho-beta-D-ribosyl)glycinamide + L-glutamine + ATP + H2O = 2-formamido-N(1)-(5-O-phospho-beta-D-ribosyl)acetamidine + L-glutamate + ADP + phosphate + H(+). The protein operates within purine metabolism; IMP biosynthesis via de novo pathway; 5-amino-1-(5-phospho-D-ribosyl)imidazole from N(2)-formyl-N(1)-(5-phospho-D-ribosyl)glycinamide: step 1/2. In terms of biological role, part of the phosphoribosylformylglycinamidine synthase complex involved in the purines biosynthetic pathway. Catalyzes the ATP-dependent conversion of formylglycinamide ribonucleotide (FGAR) and glutamine to yield formylglycinamidine ribonucleotide (FGAM) and glutamate. The FGAM synthase complex is composed of three subunits. PurQ produces an ammonia molecule by converting glutamine to glutamate. PurL transfers the ammonia molecule to FGAR to form FGAM in an ATP-dependent manner. PurS interacts with PurQ and PurL and is thought to assist in the transfer of the ammonia molecule from PurQ to PurL. The chain is Phosphoribosylformylglycinamidine synthase subunit PurL from Limosilactobacillus fermentum (strain NBRC 3956 / LMG 18251) (Lactobacillus fermentum).